We begin with the raw amino-acid sequence, 417 residues long: Serine hydroxymethyltransferase (417 aa).

Residues Leu-121 and 125-127 (GHL) each bind (6S)-5,6,7,8-tetrahydrofolate. Position 229 is an N6-(pyridoxal phosphate)lysine (Lys-229). 355 to 357 (SPF) is a (6S)-5,6,7,8-tetrahydrofolate binding site.

The protein belongs to the SHMT family. As to quaternary structure, homodimer. It depends on pyridoxal 5'-phosphate as a cofactor.

It localises to the cytoplasm. It carries out the reaction (6R)-5,10-methylene-5,6,7,8-tetrahydrofolate + glycine + H2O = (6S)-5,6,7,8-tetrahydrofolate + L-serine. It functions in the pathway one-carbon metabolism; tetrahydrofolate interconversion. It participates in amino-acid biosynthesis; glycine biosynthesis; glycine from L-serine: step 1/1. Functionally, catalyzes the reversible interconversion of serine and glycine with tetrahydrofolate (THF) serving as the one-carbon carrier. This reaction serves as the major source of one-carbon groups required for the biosynthesis of purines, thymidylate, methionine, and other important biomolecules. Also exhibits THF-independent aldolase activity toward beta-hydroxyamino acids, producing glycine and aldehydes, via a retro-aldol mechanism. The chain is Serine hydroxymethyltransferase from Aeromonas salmonicida (strain A449).